We begin with the raw amino-acid sequence, 554 residues long: Nuclear division defective protein 1 (554 aa).

Disordered stretches follow at residues 1-31 and 98-117; these read MDRDISYQQNYTSTGATATSSRQPSTDNNAD and IQQQQQQQQQQQQQQQALGS. Residues 98-113 show a composition bias toward low complexity; it reads IQQQQQQQQQQQQQQQ. At Thr-319 the chain carries Phosphothreonine; by CDC28. 2 disordered regions span residues 410–475 and 493–554; these read PTPN…GKKP and SSSS…FNSQ. Over residues 411-427 the composition is skewed to polar residues; sequence TPNCNSLHSTTTGTSAL. The span at 448–465 shows a compositional bias: low complexity; it reads SSSNTVSFKSKSGNNNSK. Basic residues predominate over residues 466–475; the sequence is GRIKKNGKKP. Residues 493 to 513 are compositionally biased toward low complexity; that stretch reads SSSSLSSSLNASSSAGNSNSN. Positions 515 to 524 are enriched in basic residues; that stretch reads TKKRASKLKR. The span at 525–536 shows a compositional bias: low complexity; the sequence is SQSLLSDSGSKS. Residues 539 to 554 are compositionally biased toward polar residues; the sequence is RKSCNSKSNGNLFNSQ.

Forms an activator complex with FKH2. In terms of processing, phosphorylation of Thr-319 by CDC28 is required for the interaction with FKH2 and recruitment to promoters.

The protein resides in the cytoplasm. It localises to the nucleus. Its function is as follows. Transcription activator involved in G2/M transcription through its association with FKH2. The protein is Nuclear division defective protein 1 (NDD1) of Saccharomyces cerevisiae (strain ATCC 204508 / S288c) (Baker's yeast).